The following is a 308-amino-acid chain: tRNA pseudouridine synthase B (308 aa).

Catalysis depends on aspartate 49, which acts as the Nucleophile.

This sequence belongs to the pseudouridine synthase TruB family. Type 1 subfamily.

It catalyses the reaction uridine(55) in tRNA = pseudouridine(55) in tRNA. Functionally, responsible for synthesis of pseudouridine from uracil-55 in the psi GC loop of transfer RNAs. In Nitrosococcus oceani (strain ATCC 19707 / BCRC 17464 / JCM 30415 / NCIMB 11848 / C-107), this protein is tRNA pseudouridine synthase B.